The chain runs to 105 residues: uncharacterized protein (105 aa).

The helical transmembrane segment at 29–49 threads the bilayer; that stretch reads NAFLLILSEAYLLFVFLSYLI.

It is found in the membrane. This is an uncharacterized protein from Saccharomyces cerevisiae (strain ATCC 204508 / S288c) (Baker's yeast).